The primary structure comprises 1111 residues: MKSKHYPDTVSSPDFLSLEKEIIKFWQENKVFERSVEERSKDNCFVFYDGPPFANGLPHYGHLLTGFIKDAFARYQTMLQKRVERRFGWDCHGLPAEMGAEKELGISGRTEIEKFGIDKFNDHCRTSVMKFSSEWEKYVNRQARWVDFHNDYKTMDKSFMESVMWAFKQLYDKGLVYESVRVVPYSWACETPLSNFETRLDNAYREKVSKAVTVAFELLENPQQFKSVKRKCKLLAWTTTPWTLPSNLALAIGKDIKYCAVSVHPLMSFQRVTLESISGSQCLGTGMTGSSEGSSMNGEIYIFAESYLEKFISHSEQNNIPYENCNIKLKANDLAGLSYKPLFDYFKDTKNAFRVFIADYVTEEDGTGVVHTAPGFGEEDFYLCQSHDIPVICPIDNSGKFTAEVSDLAGVHVFDANDTVIKKLKGQGSWFKTEQYIHNYPHCWRTDTPLIYRTMPSWYVAVTKFKSRMVELNKRVNWIPNHIRDGQFGKWLEGAHDWSISRNRFWGTPIPVWKSDDARYPRVDVYGSIEELERDFNVKIDDLHRPFIDTLTRLNPDDPTGKSVMRRVPDVFDCWFESGSMPFAQIHYPFENKEWFESADFITEYIAQTRGWFYTLFVLSTALFNREPFKNCICHGVVLDVKGQKLSKRLNNYADPMEVFDRYGSDALRFLMLSGSIICGGNLLLDKEGNSIRDVLKNVIKPIWNSYHFFTMYANADGIKAEVCKDYQSTIDRYMISKCFEAVESIQASMNSYSSQEACKILIDFFEVLNNWYIRRSRERFWKSDLDQDKTDAYNVLYTVFYYILRAAAPLLPLITENIWQGLKYEETSVHLANFPQLEKFDSQLIAKMDLVREVCNSALSIRNTFNIRIRQPLGSMIIYHQSSCSFLEGEPLSVIPEFFPVIQVADTGIQCAADSNEYQEMIKDEVNVKSLELVNRLEGIASLELKLNFPLLGKRIPDKIKKLVQYVKEGKWKQVENEQIFLGDESENYIIEKGEYELLLKANSEYSSVFDNNKGIVILNTELNDELILEGLARDVVRLIQETRKQADFHISDRIRVIIKTEEEKIKEAINTWFEYIKEQTLALSLDINTEIGTNFYSKEYQDLSVSIER.

The short motif at 52 to 62 is the 'HIGH' region element; sequence PFANGLPHYGH. A 'KMSKS' region motif is present at residues 645-649; sequence KLSKR. ATP is bound at residue Lys648.

This sequence belongs to the class-I aminoacyl-tRNA synthetase family. IleS type 2 subfamily. Monomer. The cofactor is Zn(2+).

The protein resides in the cytoplasm. The catalysed reaction is tRNA(Ile) + L-isoleucine + ATP = L-isoleucyl-tRNA(Ile) + AMP + diphosphate. In terms of biological role, catalyzes the attachment of isoleucine to tRNA(Ile). As IleRS can inadvertently accommodate and process structurally similar amino acids such as valine, to avoid such errors it has two additional distinct tRNA(Ile)-dependent editing activities. One activity is designated as 'pretransfer' editing and involves the hydrolysis of activated Val-AMP. The other activity is designated 'posttransfer' editing and involves deacylation of mischarged Val-tRNA(Ile). The protein is Isoleucine--tRNA ligase of Wolbachia pipientis wMel.